Here is a 328-residue protein sequence, read N- to C-terminus: Malate dehydrogenase 2 (328 aa).

An NAD(+)-binding site is contributed by 12 to 18; that stretch reads GAAGQIA. Residues Arg-93 and Arg-99 each coordinate substrate. NAD(+)-binding positions include Asn-106, Gln-113, and 130–132; that span reads VGN. Substrate is bound by residues Asn-132 and Arg-163. His-188 serves as the catalytic Proton acceptor.

Belongs to the LDH/MDH superfamily. MDH type 2 family.

It catalyses the reaction (S)-malate + NAD(+) = oxaloacetate + NADH + H(+). Functionally, catalyzes the reversible oxidation of malate to oxaloacetate. The polypeptide is Malate dehydrogenase 2 (Burkholderia vietnamiensis (strain G4 / LMG 22486) (Burkholderia cepacia (strain R1808))).